The following is a 281-amino-acid chain: 2-dehydro-3-deoxyphosphooctonate aldolase (281 aa).

Belongs to the KdsA family.

The protein localises to the cytoplasm. The catalysed reaction is D-arabinose 5-phosphate + phosphoenolpyruvate + H2O = 3-deoxy-alpha-D-manno-2-octulosonate-8-phosphate + phosphate. The protein operates within carbohydrate biosynthesis; 3-deoxy-D-manno-octulosonate biosynthesis; 3-deoxy-D-manno-octulosonate from D-ribulose 5-phosphate: step 2/3. It functions in the pathway bacterial outer membrane biogenesis; lipopolysaccharide biosynthesis. The protein is 2-dehydro-3-deoxyphosphooctonate aldolase of Ectopseudomonas mendocina (strain ymp) (Pseudomonas mendocina).